The primary structure comprises 131 residues: Histone H2B.1 (131 aa).

Positions 1-19 (MSAKAEKKPASKAPAEKKP) are enriched in basic and acidic residues. Residues 1-38 (MSAKAEKKPASKAPAEKKPAAKKTSTSTDGKKRSKARK) are disordered. N6-acetyllysine; alternate is present on residues Lys-7 and Lys-8. Residues Lys-7 and Lys-8 each participate in a glycyl lysine isopeptide (Lys-Gly) (interchain with G-Cter in SUMO); alternate cross-link. Ser-11 is subject to Phosphoserine. Lys-12 carries the post-translational modification N6-acetyllysine. N6-acetyllysine; alternate is present on residues Lys-17, Lys-18, Lys-22, and Lys-23. Glycyl lysine isopeptide (Lys-Gly) (interchain with G-Cter in SUMO); alternate cross-links involve residues Lys-17 and Lys-18. N6-butyryllysine; alternate is present on Lys-22. At Lys-23 the chain carries N6-methyllysine; alternate. Lys-35 bears the N6-succinyllysine mark. An N6,N6-dimethyllysine modification is found at Lys-38. Lys-47 carries the post-translational modification N6-succinyllysine. Lys-124 participates in a covalent cross-link: Glycyl lysine isopeptide (Lys-Gly) (interchain with G-Cter in ubiquitin).

It belongs to the histone H2B family. In terms of assembly, the nucleosome is a histone octamer containing two molecules each of H2A, H2B, H3 and H4 assembled in one H3-H4 heterotetramer and two H2A-H2B heterodimers. The octamer wraps approximately 147 bp of DNA. Post-translationally, monoubiquitinated by the RAD6/UBC2-BRE1 complex to form H2BK123ub1. H2BK123ub1 gives a specific tag for epigenetic transcriptional activation and is also prerequisite for H3K4me and H3K79me formation. H2BK123ub1 also modulates the formation of double-strand breaks during meiosis and is a prerequisite for DNA-damage checkpoint activation. Deubiquitination is performed by UBP8 in presence of SGF11. Phosphorylated by STE20 to form H2BS10ph during progression through meiotic prophase. May be correlated with chromosome condensation. H2BS10ph is also formed after H(2)O(2) treatment, and is a step leading to apoptosis. In terms of processing, acetylated by GCN5, a component of the SAGA complex, to form H2BK11ac and H2BK16ac. H2BK16ac can also be formed by ESA1, a component of the NuA4 histone acetyltransferase (HAT) complex. Acetylation of N-terminal lysines and particularly formation of H2BK11acK16ac has a positive effect on transcription. Post-translationally, sumoylation to form H2BK6su or H2BK7su, and probably also H2BK16su or H2BK17su, occurs preferentially near the telomeres and represses gene transcription.

The protein resides in the nucleus. Its subcellular location is the chromosome. Functionally, core component of nucleosome. Nucleosomes wrap and compact DNA into chromatin, limiting DNA accessibility to the cellular machineries which require DNA as a template. Histones thereby play a central role in transcription regulation, DNA repair, DNA replication and chromosomal stability. DNA accessibility is regulated via a complex set of post-translational modifications of histones, also called histone code, and nucleosome remodeling. This Saccharomyces cerevisiae (strain ATCC 204508 / S288c) (Baker's yeast) protein is Histone H2B.1 (HTB1).